Reading from the N-terminus, the 87-residue chain is MAFKKKFTPRRKFCRFCADKDLPLDYKRADILRDFITERGKIIARRITGTCAHHQRLLTREIKRARQMALLFYTAGHSSDVKKKSQI.

Belongs to the bacterial ribosomal protein bS18 family. Part of the 30S ribosomal subunit. Forms a tight heterodimer with protein bS6.

Its function is as follows. Binds as a heterodimer with protein bS6 to the central domain of the 16S rRNA, where it helps stabilize the platform of the 30S subunit. This is Small ribosomal subunit protein bS18 from Nitratidesulfovibrio vulgaris (strain DSM 19637 / Miyazaki F) (Desulfovibrio vulgaris).